A 602-amino-acid chain; its full sequence is Sodium-independent sulfate anion transporter (602 aa).

Residues 1 to 47 are Extracellular-facing; that stretch reads MSPPMSPMKPPKGFAPMSCCWSTETMQKWLPFLGWLPDYTWYALKMD. The helical transmembrane segment at 48 to 68 threads the bilayer; the sequence is FIAGISVGLTVIPQALAYAEV. A topological domain (cytoplasmic) is located at residue Ala69. A helical transmembrane segment spans residues 70-90; the sequence is GLPPQYGLYSAFMGCFVYFFL. Over 91–115 the chain is Extracellular; it reads GTSRDVTLGPTAIMSLLVSFYTFHE. A helical membrane pass occupies residues 116-136; it reads PAYAVLLAFLTGCIQLGMGFL. Over 137-143 the chain is Cytoplasmic; the sequence is RLGLLLD. A helical membrane pass occupies residues 144–164; sequence FISCPVIKGFTSAAAIIIGFG. The Extracellular segment spans residues 165 to 193; sequence QIKNLLGLQHIPRQFFLQVYYTFHNIGET. Residues 194–214 form a helical membrane-spanning segment; the sequence is RVGDAVLGLVCMVLLLVLKLM. At 215 to 246 the chain is on the cytoplasmic side; sequence RDHVPPVHPEMPTGVRLSHGLVWTATTARNAL. The helical transmembrane segment at 247-267 threads the bilayer; it reads VVSFAALVAYSFQVTGYQPFV. At 268-300 the chain is on the extracellular side; sequence LTGKTPEGLPDAHIPPFSVTTANGTISFTEMVQ. The helical transmembrane segment at 301-321 threads the bilayer; sequence GMGAGLVVVPLMGLLESIAVA. The Cytoplasmic portion of the chain corresponds to 322–337; that stretch reads KSFASQNNYRINSNQE. A helical transmembrane segment spans residues 338–358; that stretch reads LLALGFTNILGSLFSSYPVTG. Over 359-370 the chain is Extracellular; it reads SFGRTAVNAQSG. Residues 371 to 391 traverse the membrane as a helical segment; it reads VCTPAGGLMTGALVLLSLDYL. Topologically, residues 392-394 are cytoplasmic; sequence TSL. Residues 395–415 traverse the membrane as a helical segment; the sequence is FYYIPKSALAAVIIMAVVPLF. Topologically, residues 416–438 are extracellular; that stretch reads DTKIVKTLWRVKRLDLLPLCVTF. The chain crosses the membrane as a helical span at residues 439–459; that stretch reads LLCFWEVQYGILAGTLVSVLI. Residues 460-602 are Cytoplasmic-facing; the sequence is LLHSVARPKI…PEHKIALLKA (143 aa). The STAS domain occupies 466–580; it reads RPKIQVSEGP…EAEKYLKQEP (115 aa).

It belongs to the SLC26A/SulP transporter (TC 2.A.53) family.

Its subcellular location is the cell membrane. It localises to the lysosome membrane. It is found in the apical cell membrane. The protein localises to the basolateral cell membrane. The catalysed reaction is hydrogencarbonate(in) + chloride(out) = hydrogencarbonate(out) + chloride(in). It catalyses the reaction sulfate(in) + H(+)(in) = sulfate(out) + H(+)(out). The enzyme catalyses oxalate(in) + chloride(out) = oxalate(out) + chloride(in). Sodium-independent anion exchanger mediating bicarbonate, chloride, sulfate and oxalate transport. Exhibits sodium-independent sulfate anion transporter activity that may cooperate with SLC26A2 to mediate DIDS-sensitive sulfate uptake into high endothelial venules endothelial cells (HEVEC). In the kidney, mediates chloride-bicarbonate exchange, facilitating V-ATPase-mediated acid secretion. May function as a chloride channel, playing an important role in moderating chloride homeostasis and neuronal activity in the cerebellum. This is Sodium-independent sulfate anion transporter from Bos taurus (Bovine).